The primary structure comprises 104 residues: Fluoride-specific ion channel FluC 2 (104 aa).

The next 3 helical transmembrane spans lie at isoleucine 22–valine 42, leucine 48–alanine 68, and methionine 82–leucine 102. Na(+)-binding residues include glycine 59 and serine 62.

Belongs to the fluoride channel Fluc/FEX (TC 1.A.43) family.

Its subcellular location is the cell membrane. The enzyme catalyses fluoride(in) = fluoride(out). Na(+) is not transported, but it plays an essential structural role and its presence is essential for fluoride channel function. Fluoride-specific ion channel. Important for reducing fluoride concentration in the cell, thus reducing its toxicity. This is Fluoride-specific ion channel FluC 2 from Corynebacterium diphtheriae (strain ATCC 700971 / NCTC 13129 / Biotype gravis).